The primary structure comprises 226 residues: Orotidine 5'-phosphate decarboxylase (226 aa).

Substrate is bound by residues Asp-8, Lys-30, 58 to 67 (DLKLYDIPNT), Thr-117, Arg-177, Gln-186, Gly-206, and Arg-207. The active-site Proton donor is the Lys-60.

This sequence belongs to the OMP decarboxylase family. Type 1 subfamily. In terms of assembly, homodimer.

The catalysed reaction is orotidine 5'-phosphate + H(+) = UMP + CO2. The protein operates within pyrimidine metabolism; UMP biosynthesis via de novo pathway; UMP from orotate: step 2/2. In terms of biological role, catalyzes the decarboxylation of orotidine 5'-monophosphate (OMP) to uridine 5'-monophosphate (UMP). The protein is Orotidine 5'-phosphate decarboxylase of Campylobacter concisus (strain 13826).